Here is a 145-residue protein sequence, read N- to C-terminus: Cystatin-F (145 aa).

A signal peptide spans 1–19 (MRAAGTLLAFCCLVLSTTG). Residue N62 is glycosylated (N-linked (GlcNAc...) asparagine). Positions 81-85 (QIVKG) match the Secondary area of contact motif. A disulfide bridge connects residues C99 and C110. N115 is a glycosylation site (N-linked (GlcNAc...) asparagine). The cysteines at positions 124 and 144 are disulfide-linked.

This sequence belongs to the cystatin family. As to quaternary structure, homodimer; disulfide-linked. Primarily expressed in peripheral blood cells and spleen.

The protein localises to the secreted. It is found in the cytoplasm. In terms of biological role, inhibits papain and cathepsin L but with affinities lower than other cystatins. May play a role in immune regulation through inhibition of a unique target in the hematopoietic system. The polypeptide is Cystatin-F (CST7) (Homo sapiens (Human)).